The sequence spans 34 residues: Photosystem II reaction center protein Psb30 (34 aa).

A helical transmembrane segment spans residues 6 to 26 (VIGQLIATGAIMLAGPAVIVL).

This sequence belongs to the Psb30/Ycf12 family. PSII is composed of 1 copy each of membrane proteins PsbA, PsbB, PsbC, PsbD, PsbE, PsbF, PsbH, PsbI, PsbJ, PsbK, PsbL, PsbM, PsbT, PsbX, PsbY, PsbZ, Psb30/Ycf12, peripheral proteins of the oxygen-evolving complex and a large number of cofactors. It forms dimeric complexes.

The protein localises to the plastid. It localises to the chloroplast thylakoid membrane. Its function is as follows. A core subunit of photosystem II (PSII), probably helps stabilize the reaction center. This chain is Photosystem II reaction center protein Psb30, found in Trieres chinensis (Marine centric diatom).